A 412-amino-acid polypeptide reads, in one-letter code: Transforming growth factor beta-3 proprotein (412 aa).

An N-terminal signal peptide occupies residues 1–23 (MKMHLQRALVVLALLNFATVSLS). Residues Asn-74, Asn-135, and Asn-142 are each glycosylated (N-linked (GlcNAc...) asparagine). Residues 261–263 (RGD) carry the Cell attachment site motif. At Gln-293 the chain carries N5-methylglutamine. Intrachain disulfides connect Cys-307–Cys-316, Cys-315–Cys-378, Cys-344–Cys-409, and Cys-348–Cys-411.

The protein belongs to the TGF-beta family. Interacts with ASPN. Latency-associated peptide: Homodimer; disulfide-linked. Latency-associated peptide: Interacts with Transforming growth factor beta-3 (TGF-beta-3) chain; interaction is non-covalent and maintains (TGF-beta-3) in a latent state. Latency-associated peptide: Interacts with LRRC32/GARP; leading to regulate activation of TGF-beta-3 and promote epithelial fusion during palate development. Latency-associated peptide: Interacts (via cell attachment site) with integrins, leading to release of the active TGF-beta-3. Transforming growth factor beta-3: Homodimer; disulfide-linked. Transforming growth factor beta-3: Interacts with TGF-beta receptors (TGFBR1 and TGFBR2), leading to signal transduction. Post-translationally, transforming growth factor beta-3 proprotein: The precursor proprotein is cleaved in the Golgi apparatus to form Transforming growth factor beta-3 (TGF-beta-3) and Latency-associated peptide (LAP) chains, which remain non-covalently linked, rendering TGF-beta-3 inactive. In terms of processing, methylated at Gln-293 by N6AMT1.

It localises to the secreted. It is found in the extracellular space. Its subcellular location is the extracellular matrix. Functionally, transforming growth factor beta-3 proprotein: Precursor of the Latency-associated peptide (LAP) and Transforming growth factor beta-3 (TGF-beta-3) chains, which constitute the regulatory and active subunit of TGF-beta-3, respectively. In terms of biological role, required to maintain the Transforming growth factor beta-3 (TGF-beta-3) chain in a latent state during storage in extracellular matrix. Associates non-covalently with TGF-beta-3 and regulates its activation via interaction with 'milieu molecules', such as LTBP1 and LRRC32/GARP, that control activation of TGF-beta-3. Interaction with integrins results in distortion of the Latency-associated peptide chain and subsequent release of the active TGF-beta-3. Transforming growth factor beta-3: Multifunctional protein that regulates embryogenesis and cell differentiation and is required in various processes such as secondary palate development. Activation into mature form follows different steps: following cleavage of the proprotein in the Golgi apparatus, Latency-associated peptide (LAP) and Transforming growth factor beta-3 (TGF-beta-3) chains remain non-covalently linked rendering TGF-beta-3 inactive during storage in extracellular matrix. At the same time, LAP chain interacts with 'milieu molecules', such as LTBP1 and LRRC32/GARP that control activation of TGF-beta-3 and maintain it in a latent state during storage in extracellular milieus. TGF-beta-3 is released from LAP by integrins: integrin-binding results in distortion of the LAP chain and subsequent release of the active TGF-beta-3. Once activated following release of LAP, TGF-beta-3 acts by binding to TGF-beta receptors (TGFBR1 and TGFBR2), which transduce signal. The sequence is that of Transforming growth factor beta-3 proprotein (TGFB3) from Homo sapiens (Human).